A 96-amino-acid chain; its full sequence is Large ribosomal subunit protein eL14 (96 aa).

It belongs to the eukaryotic ribosomal protein eL14 family.

The protein is Large ribosomal subunit protein eL14 of Sulfurisphaera tokodaii (strain DSM 16993 / JCM 10545 / NBRC 100140 / 7) (Sulfolobus tokodaii).